A 440-amino-acid polypeptide reads, in one-letter code: Proline--tRNA ligase (440 aa).

This sequence belongs to the class-II aminoacyl-tRNA synthetase family. ProS type 2 subfamily. As to quaternary structure, homodimer.

It is found in the cytoplasm. It carries out the reaction tRNA(Pro) + L-proline + ATP = L-prolyl-tRNA(Pro) + AMP + diphosphate. Catalyzes the attachment of proline to tRNA(Pro) in a two-step reaction: proline is first activated by ATP to form Pro-AMP and then transferred to the acceptor end of tRNA(Pro). In Xanthobacter autotrophicus (strain ATCC BAA-1158 / Py2), this protein is Proline--tRNA ligase.